A 353-amino-acid chain; its full sequence is Ferredoxin--NADP reductase 1 (353 aa).

7 residues coordinate FAD: D43, Q51, Y56, A96, F135, D300, and S341.

The protein belongs to the ferredoxin--NADP reductase type 2 family. As to quaternary structure, homodimer. Requires FAD as cofactor.

It carries out the reaction 2 reduced [2Fe-2S]-[ferredoxin] + NADP(+) + H(+) = 2 oxidized [2Fe-2S]-[ferredoxin] + NADPH. The chain is Ferredoxin--NADP reductase 1 from Cupriavidus metallidurans (strain ATCC 43123 / DSM 2839 / NBRC 102507 / CH34) (Ralstonia metallidurans).